Reading from the N-terminus, the 64-residue chain is DNA-binding protein 7a (64 aa).

N6-methyllysine; partial is present on residues K5 and K7.

It belongs to the 7 kDa DNA-binding/endoribonuclease P2 family. In terms of assembly, homodimer. Post-translationally, lys-5 and Lys-7 were found to be 60% monomethylated. ADP-ribosylated by endogenous proteins in vitro.

Can constrain negative DNA supercoils. May be involved in maintaining the integrity of the genome at high temperature. Has RNA endonuclease activity with a narrow substrate specificity; the cleavage products are 3'-phosphooligonucleotides. The chain is DNA-binding protein 7a (sso7a1) from Saccharolobus solfataricus (strain ATCC 35092 / DSM 1617 / JCM 11322 / P2) (Sulfolobus solfataricus).